A 135-amino-acid chain; its full sequence is Congerin-1 (135 aa).

S1 bears the N-acetylserine mark. In terms of domain architecture, Galectin spans 3–135 (GLQVKNFDFT…GDARLTLVKE (133 aa)). 70-76 (WETEQRS) serves as a coordination point for a beta-D-galactoside.

In terms of assembly, homodimer.

Its function is as follows. This protein binds beta-galactoside. Its physiological function is not yet known. In Conger myriaster (Conger eel), this protein is Congerin-1.